The chain runs to 508 residues: Flagellin (508 aa).

The protein belongs to the bacterial flagellin family.

The protein resides in the secreted. It is found in the bacterial flagellum. Functionally, flagellin is the subunit protein which polymerizes to form the filaments of bacterial flagella. The polypeptide is Flagellin (fliC) (Salmonella oranienberg).